We begin with the raw amino-acid sequence, 496 residues long: 1-aminocyclopropane-1-carboxylate synthase 2 (496 aa).

Positions 55 and 93 each coordinate substrate. Position 279 is an N6-(pyridoxal phosphate)lysine (K279). S483, S488, and S491 each carry phosphoserine.

Belongs to the class-I pyridoxal-phosphate-dependent aminotransferase family. In terms of assembly, homodimer and heterodimer. In vivo, the relevance of heterodimerization with other ACS enzymes is however unsure. Interacts with GRF3. Pyridoxal 5'-phosphate serves as cofactor. Post-translationally, phosphorylated on serine residue by MAP kinase (MPK6). May be processed at its C-terminus. As to expression, high in developing leaves and in flowers. Expressed in roots and siliques.

It carries out the reaction S-adenosyl-L-methionine = 1-aminocyclopropane-1-carboxylate + S-methyl-5'-thioadenosine + H(+). The protein operates within alkene biosynthesis; ethylene biosynthesis via S-adenosyl-L-methionine; ethylene from S-adenosyl-L-methionine: step 1/2. 1-aminocyclopropane-1-carboxylate synthase (ACS) enzymes catalyze the conversion of S-adenosyl-L-methionine (SAM) into 1-aminocyclopropane-1-carboxylate (ACC), a direct precursor of ethylene. The chain is 1-aminocyclopropane-1-carboxylate synthase 2 (ACS2) from Arabidopsis thaliana (Mouse-ear cress).